The primary structure comprises 356 residues: S-adenosylmethionine:tRNA ribosyltransferase-isomerase (356 aa).

The protein belongs to the QueA family. In terms of assembly, monomer.

It is found in the cytoplasm. It carries out the reaction 7-aminomethyl-7-carbaguanosine(34) in tRNA + S-adenosyl-L-methionine = epoxyqueuosine(34) in tRNA + adenine + L-methionine + 2 H(+). It functions in the pathway tRNA modification; tRNA-queuosine biosynthesis. Transfers and isomerizes the ribose moiety from AdoMet to the 7-aminomethyl group of 7-deazaguanine (preQ1-tRNA) to give epoxyqueuosine (oQ-tRNA). This chain is S-adenosylmethionine:tRNA ribosyltransferase-isomerase, found in Salmonella arizonae (strain ATCC BAA-731 / CDC346-86 / RSK2980).